Consider the following 114-residue polypeptide: T cell receptor alpha variable 3 (114 aa).

A signal peptide spans 1–20 (MASAPISMLAMLFTLSGLRA). The 94-residue stretch at 21–114 (QSVAQPEDQV…SALYFCAVRD (94 aa)) folds into the Ig-like domain. C42 and C110 are joined by a disulfide. N-linked (GlcNAc...) asparagine glycosylation is present at N87.

In terms of assembly, alpha-beta TR is a heterodimer composed of an alpha and beta chain; disulfide-linked. The alpha-beta TR is associated with the transmembrane signaling CD3 coreceptor proteins to form the TR-CD3 (TcR or TCR). The assembly of alpha-beta TR heterodimers with CD3 occurs in the endoplasmic reticulum where a single alpha-beta TR heterodimer associates with one CD3D-CD3E heterodimer, one CD3G-CD3E heterodimer and one CD247 homodimer forming a stable octameric structure. CD3D-CD3E and CD3G-CD3E heterodimers preferentially associate with TR alpha and TR beta chains, respectively. The association of the CD247 homodimer is the last step of TcR assembly in the endoplasmic reticulum and is required for transport to the cell surface.

The protein resides in the cell membrane. In terms of biological role, v region of the variable domain of T cell receptor (TR) alpha chain that participates in the antigen recognition. Alpha-beta T cell receptors are antigen specific receptors which are essential to the immune response and are present on the cell surface of T lymphocytes. Recognize peptide-major histocompatibility (MH) (pMH) complexes that are displayed by antigen presenting cells (APC), a prerequisite for efficient T cell adaptive immunity against pathogens. Binding of alpha-beta TR to pMH complex initiates TR-CD3 clustering on the cell surface and intracellular activation of LCK that phosphorylates the ITAM motifs of CD3G, CD3D, CD3E and CD247 enabling the recruitment of ZAP70. In turn ZAP70 phosphorylates LAT, which recruits numerous signaling molecules to form the LAT signalosome. The LAT signalosome propagates signal branching to three major signaling pathways, the calcium, the mitogen-activated protein kinase (MAPK) kinase and the nuclear factor NF-kappa-B (NF-kB) pathways, leading to the mobilization of transcription factors that are critical for gene expression and essential for T cell growth and differentiation. The T cell repertoire is generated in the thymus, by V-(D)-J rearrangement. This repertoire is then shaped by intrathymic selection events to generate a peripheral T cell pool of self-MH restricted, non-autoaggressive T cells. Post-thymic interaction of alpha-beta TR with the pMH complexes shapes TR structural and functional avidity. The polypeptide is T cell receptor alpha variable 3 (Homo sapiens (Human)).